A 57-amino-acid polypeptide reads, in one-letter code: uncharacterized protein (57 aa).

The disordered stretch occupies residues 1-57 (MPHYVVVKSPMRRRRSPRRRSPRVCYSPRRVACSPRRRSPRRRSPRRRSPRRSIVVY). Over residues 10–22 (PMRRRRSPRRRSP) the composition is skewed to basic residues. The segment covering 23-34 (RVCYSPRRVACS) has biased composition (low complexity). Positions 35–51 (PRRRSPRRRSPRRRSPR) are enriched in basic residues.

This is an uncharacterized protein from Acheta domesticus (House cricket).